Reading from the N-terminus, the 102-residue chain is Small ribosomal subunit protein uS10 (102 aa).

Belongs to the universal ribosomal protein uS10 family. As to quaternary structure, part of the 30S ribosomal subunit.

Functionally, involved in the binding of tRNA to the ribosomes. This is Small ribosomal subunit protein uS10 from Methylorubrum populi (strain ATCC BAA-705 / NCIMB 13946 / BJ001) (Methylobacterium populi).